We begin with the raw amino-acid sequence, 1005 residues long: Non-structural polyprotein 1A (1005 aa).

Helical transmembrane passes span 239–259, 286–306, 313–333, and 344–364; these read PDGA…MDYM, DEIV…SLAY, VLIL…ALVA, and TLVL…YGLG. Residues H524, D556, and S621 each act as charge relay system; for serine protease activity in the active site. Y753 is modified (O-(5'-phospho-RNA)-tyrosine). Residues 940–984 are disordered; that stretch reads PVIQQVEQQPQVEQQQQPQQPVVEEKKRTPPPKPQRKPKTGAKAK. Residues 941-961 show a composition bias toward low complexity; it reads VIQQVEQQPQVEQQQQPQQPV.

Belongs to the astroviridae polyprotein 1A family. Monomer. Post-translationally, cleaved by the viral and host proteases. The protease is probably autocatalytically cleaved.

The protein resides in the host membrane. The catalysed reaction is RNA(n) + a ribonucleoside 5'-triphosphate = RNA(n+1) + diphosphate. In terms of biological role, responsible for the cleavage of the polyprotein into functional products. Protein covalently attached to the 5' extremity of the genomic and subgenomic RNAs. It may serve as a primer for the replicase. The polypeptide is Non-structural polyprotein 1A (ORF1) (Avian nephritis virus 1 (ANV-1)).